A 326-amino-acid polypeptide reads, in one-letter code: Acetyl-coenzyme A carboxylase carboxyl transferase subunit alpha (326 aa).

In terms of domain architecture, CoA carboxyltransferase C-terminal spans 44–298; sequence KLETRAMQLR…KQALLDNLDE (255 aa).

This sequence belongs to the AccA family. As to quaternary structure, acetyl-CoA carboxylase is a heterohexamer composed of biotin carboxyl carrier protein (AccB), biotin carboxylase (AccC) and two subunits each of ACCase subunit alpha (AccA) and ACCase subunit beta (AccD).

The protein localises to the cytoplasm. The enzyme catalyses N(6)-carboxybiotinyl-L-lysyl-[protein] + acetyl-CoA = N(6)-biotinyl-L-lysyl-[protein] + malonyl-CoA. Its pathway is lipid metabolism; malonyl-CoA biosynthesis; malonyl-CoA from acetyl-CoA: step 1/1. Component of the acetyl coenzyme A carboxylase (ACC) complex. First, biotin carboxylase catalyzes the carboxylation of biotin on its carrier protein (BCCP) and then the CO(2) group is transferred by the carboxyltransferase to acetyl-CoA to form malonyl-CoA. The protein is Acetyl-coenzyme A carboxylase carboxyl transferase subunit alpha of Trichormus variabilis (strain ATCC 29413 / PCC 7937) (Anabaena variabilis).